The primary structure comprises 356 residues: 5-amino-6-(D-ribitylamino)uracil--L-tyrosine 4-hydroxyphenyl transferase (356 aa).

One can recognise a Radical SAM core domain in the interval 47 to 281 (VTYIVNRNIN…AIARILLNTH (235 aa)). The [4Fe-4S] cluster site is built by C61, C65, and C68.

Belongs to the radical SAM superfamily. CofH family. In terms of assembly, consists of two subunits, CofG and CofH. It depends on [4Fe-4S] cluster as a cofactor.

The enzyme catalyses 5-amino-6-(D-ribitylamino)uracil + L-tyrosine + S-adenosyl-L-methionine = 5-amino-5-(4-hydroxybenzyl)-6-(D-ribitylimino)-5,6-dihydrouracil + 2-iminoacetate + 5'-deoxyadenosine + L-methionine + H(+). It participates in cofactor biosynthesis; coenzyme F0 biosynthesis. In terms of biological role, catalyzes the radical-mediated synthesis of 5-amino-5-(4-hydroxybenzyl)-6-(D-ribitylimino)-5,6-dihydrouracil from 5-amino-6-(D-ribitylamino)uracil and L-tyrosine. This chain is 5-amino-6-(D-ribitylamino)uracil--L-tyrosine 4-hydroxyphenyl transferase, found in Methanococcoides burtonii (strain DSM 6242 / NBRC 107633 / OCM 468 / ACE-M).